Consider the following 804-residue polypeptide: Leucine--tRNA ligase (804 aa).

The 'HIGH' region motif lies at 40–51 (PYPSGAGLHVGH). Positions 576–580 (KMSKS) match the 'KMSKS' region motif. Lysine 579 is a binding site for ATP.

This sequence belongs to the class-I aminoacyl-tRNA synthetase family.

It localises to the cytoplasm. The catalysed reaction is tRNA(Leu) + L-leucine + ATP = L-leucyl-tRNA(Leu) + AMP + diphosphate. The chain is Leucine--tRNA ligase from Bacillus subtilis (strain 168).